Reading from the N-terminus, the 165-residue chain is NAD(P)H-quinone oxidoreductase subunit J, chloroplastic (165 aa).

This sequence belongs to the complex I 30 kDa subunit family. NDH is composed of at least 16 different subunits, 5 of which are encoded in the nucleus.

It is found in the plastid. The protein resides in the chloroplast thylakoid membrane. The enzyme catalyses a plastoquinone + NADH + (n+1) H(+)(in) = a plastoquinol + NAD(+) + n H(+)(out). It catalyses the reaction a plastoquinone + NADPH + (n+1) H(+)(in) = a plastoquinol + NADP(+) + n H(+)(out). Functionally, NDH shuttles electrons from NAD(P)H:plastoquinone, via FMN and iron-sulfur (Fe-S) centers, to quinones in the photosynthetic chain and possibly in a chloroplast respiratory chain. The immediate electron acceptor for the enzyme in this species is believed to be plastoquinone. Couples the redox reaction to proton translocation, and thus conserves the redox energy in a proton gradient. This Ipomoea purpurea (Common morning glory) protein is NAD(P)H-quinone oxidoreductase subunit J, chloroplastic.